Consider the following 199-residue polypeptide: N-(5'-phosphoribosyl)anthranilate isomerase (199 aa).

This sequence belongs to the TrpF family.

It carries out the reaction N-(5-phospho-beta-D-ribosyl)anthranilate = 1-(2-carboxyphenylamino)-1-deoxy-D-ribulose 5-phosphate. The protein operates within amino-acid biosynthesis; L-tryptophan biosynthesis; L-tryptophan from chorismate: step 3/5. The protein is N-(5'-phosphoribosyl)anthranilate isomerase of Solibacter usitatus (strain Ellin6076).